A 156-amino-acid chain; its full sequence is Transcriptional repressor NrdR (156 aa).

The segment at 3 to 34 (CPFCGSMDTRVLDSRPTLDGAAIRRRRECISC) is a zinc-finger region. In terms of domain architecture, ATP-cone spans 49–139 (VLVIKKDGRR…VYRDFREVDQ (91 aa)).

The protein belongs to the NrdR family. The cofactor is Zn(2+).

Functionally, negatively regulates transcription of bacterial ribonucleotide reductase nrd genes and operons by binding to NrdR-boxes. In Thermotoga neapolitana (strain ATCC 49049 / DSM 4359 / NBRC 107923 / NS-E), this protein is Transcriptional repressor NrdR.